The chain runs to 162 residues: Large ribosomal subunit protein uL30 (162 aa).

The protein belongs to the universal ribosomal protein uL30 family. As to quaternary structure, part of the 50S ribosomal subunit.

The protein is Large ribosomal subunit protein uL30 of Staphylothermus marinus (strain ATCC 43588 / DSM 3639 / JCM 9404 / F1).